Reading from the N-terminus, the 276-residue chain is Caspase-6 (276 aa).

Positions 1 to 5 are excised as a propeptide; the sequence is MTETD. A tri-arginine exosite region spans residues 25–27; sequence KRR. Serine 62 carries the phosphoserine modification. Histidine 104 is an active-site residue. Residues 108 to 125 form a 130's region region; it reads NHVYAYDAKIEIQTLTGL. Residue cysteine 146 is part of the active site. A propeptide spanning residues 163-175 is cleaved from the precursor; it reads HQTDKLDNVTQVD. At serine 239 the chain carries Phosphoserine. 2 S-palmitoyl cysteine lipidation sites follow: cysteine 246 and cysteine 259.

This sequence belongs to the peptidase C14A family. In terms of assembly, heterotetramer that consists of two anti-parallel arranged heterodimers, each one formed by a 18 kDa (p18) and a 11 kDa (p11) subunit. Interacts with BIRC6/bruce. Interacts with RIPK3. Heterotetramer that consists of two anti-parallel arranged heterodimers, each one formed by a 18 kDa (Caspase-6 subunit p18) and a 11 kDa (Caspase-6 subunit p11) subunit. Phosphorylated by NUAK1; phosphorylation inhibits self-activation. Phosphorylation at Ser-239 by AMP-activated protein kinase (PRKAA1 or PRKAA2) inhibits autocleavage, preventing caspase activation, thereby preventing hepatocyte apoptosis. Post-translationally, palmitoylation by ZDHHC17 blocks dimerization and subsequent activation, leading to inhibit the cysteine protease activity. In terms of processing, can be cleaved and activated by different caspases, depending on the context. Cleaved and activated by caspase-8 (CASP8) and subsequently by caspase-3 (CASP3). Can also undergo autoactivation by mediating autocleavage at Asp-162 and Asp-175, while it is not able to cleave its N-terminal disordered prodomain. Cleaved and activated by CASP1, possibly in the context of inflammation. As to expression, highly expressed in lung, liver, kidney, testis, and heart. Lower levels in spleen, skeletal muscle and brain. Expressed in neurons.

The protein localises to the cytoplasm. The protein resides in the nucleus. It catalyses the reaction Strict requirement for Asp at position P1 and has a preferred cleavage sequence of Val-Glu-His-Asp-|-.. With respect to regulation, during activation, the N-terminal disordered prodomain is removed by cleavage. Concomitantly, double cleavage gives rise to a large 18-kDa and a small 11-kDa subunit. The two large and two small subunits then assemble to form the active CASP6 complex. Can be cleaved and activated by different caspases, depending on the context. Cleaved and activated by caspase-8 (CASP8) and subsequently by caspase-3 (CASP3). Can also undergo autoactivation by mediating autocleavage at Asp-162 and Asp-175, while it is not able to cleave its N-terminal disordered prodomain. Intramolecular cleavage at Asp-175 is a prerequisite for CASP6 self-activation. Cleaved and activated by CASP1 in neurons, possibly in the context of inflammation. Phosphorylation at Ser-239 inhibits autocleavage, preventing caspase activation. Its function is as follows. Cysteine protease that plays essential roles in programmed cell death, axonal degeneration, development and innate immunity. Acts as a non-canonical executioner caspase during apoptosis: localizes in the nucleus and cleaves the nuclear structural protein NUMA1 and lamin A/LMNA thereby inducing nuclear shrinkage and fragmentation. Lamin-A/LMNA cleavage is required for chromatin condensation and nuclear disassembly during apoptotic execution. Acts as a regulator of liver damage by promoting hepatocyte apoptosis: in absence of phosphorylation by AMP-activated protein kinase (AMPK), catalyzes cleavage of BID, leading to cytochrome c release, thereby participating in nonalcoholic steatohepatitis. Cleaves PARK7/DJ-1 in cells undergoing apoptosis. Involved in intrinsic apoptosis by mediating cleavage of RIPK1. Furthermore, cleaves many transcription factors such as NF-kappa-B and cAMP response element-binding protein/CREBBP. Cleaves phospholipid scramblase proteins XKR4 and XKR9. In addition to apoptosis, involved in different forms of programmed cell death. Plays an essential role in defense against viruses by acting as a central mediator of the ZBP1-mediated pyroptosis, apoptosis, and necroptosis (PANoptosis), independently of its cysteine protease activity. PANoptosis is a unique inflammatory programmed cell death, which provides a molecular scaffold that allows the interactions and activation of machinery required for inflammasome/pyroptosis, apoptosis and necroptosis. Mechanistically, interacts with RIPK3 and enhances the interaction between RIPK3 and ZBP1, leading to ZBP1-mediated inflammasome activation and cell death. Plays an essential role in axon degeneration during axon pruning which is the remodeling of axons during neurogenesis but not apoptosis. Regulates B-cell programs both during early development and after antigen stimulation. In terms of biological role, (Microbial infection) Proteolytically cleaves the N protein of coronaviruses. The cleavage leads to two fragments and modulates coronavirus replication by regulating IFN signaling. The two fragments produced by the cleavage interact with IRF3 inhibiting its nuclear translocation after activation and reduce the expression of IFNB and IFN-stimulated genes. The chain is Caspase-6 from Mus musculus (Mouse).